Consider the following 69-residue polypeptide: Large ribosomal subunit protein uL29 (69 aa).

This sequence belongs to the universal ribosomal protein uL29 family.

In Staphylococcus aureus (strain Mu3 / ATCC 700698), this protein is Large ribosomal subunit protein uL29.